We begin with the raw amino-acid sequence, 245 residues long: Phycocyanobilin:ferredoxin oxidoreductase (245 aa).

The protein belongs to the HY2 family.

It carries out the reaction (2R,3Z)-phycocyanobilin + 4 oxidized [2Fe-2S]-[ferredoxin] = biliverdin IXalpha + 4 reduced [2Fe-2S]-[ferredoxin] + 4 H(+). In terms of biological role, catalyzes the four-electron reduction of biliverdin IX-alpha (2-electron reduction at both the A and D rings); the reaction proceeds via an isolatable 2-electron intermediate, 181,182-dihydrobiliverdin. In Gloeothece citriformis (strain PCC 7424) (Cyanothece sp. (strain PCC 7424)), this protein is Phycocyanobilin:ferredoxin oxidoreductase.